We begin with the raw amino-acid sequence, 408 residues long: Bifunctional enzyme IspD/IspF (408 aa).

Positions 1 to 247 are 2-C-methyl-D-erythritol 4-phosphate cytidylyltransferase; the sequence is MNAPFEKDRR…GPAMTELPDI (247 aa). Positions 248–408 are 2-C-methyl-D-erythritol 2,4-cyclodiphosphate synthase; the sequence is RVGNGYDVHG…TVAYPGSLGN (161 aa). 2 residues coordinate a divalent metal cation: Asp-254 and His-256. 4-CDP-2-C-methyl-D-erythritol 2-phosphate is bound by residues 254–256 and 280–281; these read DVH and HS. An a divalent metal cation-binding site is contributed by His-288. 4-CDP-2-C-methyl-D-erythritol 2-phosphate is bound by residues 302 to 304, 378 to 381, Phe-385, and Arg-388; these read DIG and TTNE.

In the N-terminal section; belongs to the IspD/TarI cytidylyltransferase family. IspD subfamily. The protein in the C-terminal section; belongs to the IspF family. A divalent metal cation is required as a cofactor.

It catalyses the reaction 2-C-methyl-D-erythritol 4-phosphate + CTP + H(+) = 4-CDP-2-C-methyl-D-erythritol + diphosphate. It carries out the reaction 4-CDP-2-C-methyl-D-erythritol 2-phosphate = 2-C-methyl-D-erythritol 2,4-cyclic diphosphate + CMP. It functions in the pathway isoprenoid biosynthesis; isopentenyl diphosphate biosynthesis via DXP pathway; isopentenyl diphosphate from 1-deoxy-D-xylulose 5-phosphate: step 2/6. Its pathway is isoprenoid biosynthesis; isopentenyl diphosphate biosynthesis via DXP pathway; isopentenyl diphosphate from 1-deoxy-D-xylulose 5-phosphate: step 4/6. In terms of biological role, bifunctional enzyme that catalyzes the formation of 4-diphosphocytidyl-2-C-methyl-D-erythritol from CTP and 2-C-methyl-D-erythritol 4-phosphate (MEP) (IspD), and catalyzes the conversion of 4-diphosphocytidyl-2-C-methyl-D-erythritol 2-phosphate (CDP-ME2P) to 2-C-methyl-D-erythritol 2,4-cyclodiphosphate (ME-CPP) with a corresponding release of cytidine 5-monophosphate (CMP) (IspF). This Chelativorans sp. (strain BNC1) protein is Bifunctional enzyme IspD/IspF.